The sequence spans 270 residues: Homeobox protein Hox-D12 (270 aa).

The segment at 102–122 (APEAAAGPEERGRTRPSFAPE) is disordered. Positions 202–261 (ARKKRKPYTKQQIAELENEFLVNEFINRQKRKELSNRLNLSDQQVKIWFQNRRMKKKRVV) form a DNA-binding region, homeobox.

Belongs to the Abd-B homeobox family.

The protein resides in the nucleus. In terms of biological role, sequence-specific transcription factor which is part of a developmental regulatory system that provides cells with specific positional identities on the anterior-posterior axis. This is Homeobox protein Hox-D12 (HOXD12) from Homo sapiens (Human).